A 230-amino-acid polypeptide reads, in one-letter code: Cytochrome b6-f complex iron-sulfur subunit, chloroplastic (230 aa).

A compositionally biased stretch (low complexity) spans 1-16 (MASTTLSATPTPSQLS). Residues 1 to 20 (MASTTLSATPTPSQLSAAKN) are disordered. The transit peptide at 1–56 (MASTTLSATPTPSQLSAAKNGAYSPSRALLGKTARGLYPEKEMVSRKVTCQATSIP) directs the protein to the chloroplast. A helical membrane pass occupies residues 73–93 (LLGALSLPTAGMLIPYGAFFV). The region spanning 116-212 (AAAWLKTHGP…CDISEEGKVV (97 aa)) is the Rieske domain. [2Fe-2S] cluster contacts are provided by cysteine 158, histidine 160, cysteine 176, and histidine 179. Residues cysteine 163 and cysteine 178 are joined by a disulfide bond.

Belongs to the Rieske iron-sulfur protein family. In terms of assembly, the 4 large subunits of the cytochrome b6-f complex are cytochrome b6, subunit IV (17 kDa polypeptide, petD), cytochrome f and the Rieske protein, while the 4 small subunits are petG, petL, petM and petN. The complex functions as a dimer. It depends on [2Fe-2S] cluster as a cofactor.

It localises to the plastid. The protein resides in the chloroplast thylakoid membrane. It carries out the reaction 2 oxidized [plastocyanin] + a plastoquinol + 2 H(+)(in) = 2 reduced [plastocyanin] + a plastoquinone + 4 H(+)(out). Its function is as follows. Component of the cytochrome b6-f complex, which mediates electron transfer between photosystem II (PSII) and photosystem I (PSI), cyclic electron flow around PSI, and state transitions. This chain is Cytochrome b6-f complex iron-sulfur subunit, chloroplastic (petC), found in Fritillaria agrestis (Stinkbells).